The chain runs to 475 residues: Glycogen synthase (475 aa).

ADP-alpha-D-glucose is bound at residue Lys-15.

This sequence belongs to the glycosyltransferase 1 family. Bacterial/plant glycogen synthase subfamily.

The catalysed reaction is [(1-&gt;4)-alpha-D-glucosyl](n) + ADP-alpha-D-glucose = [(1-&gt;4)-alpha-D-glucosyl](n+1) + ADP + H(+). The protein operates within glycan biosynthesis; glycogen biosynthesis. Functionally, synthesizes alpha-1,4-glucan chains using ADP-glucose. This is Glycogen synthase from Anaeromyxobacter dehalogenans (strain 2CP-C).